Reading from the N-terminus, the 403-residue chain is Phosphoglycerate kinase (403 aa).

Residues 21–23, Arg36, 59–62, Arg119, and Arg159 each bind substrate; these read DFN and HLGR. Residues Lys214, Gly301, Glu332, and 359–362 each bind ATP; that span reads GGDS.

The protein belongs to the phosphoglycerate kinase family. Monomer.

Its subcellular location is the cytoplasm. The enzyme catalyses (2R)-3-phosphoglycerate + ATP = (2R)-3-phospho-glyceroyl phosphate + ADP. Its pathway is carbohydrate degradation; glycolysis; pyruvate from D-glyceraldehyde 3-phosphate: step 2/5. This chain is Phosphoglycerate kinase, found in Lactobacillus helveticus (strain DPC 4571).